The following is an 835-amino-acid chain: Serine/threonine-protein kinase TNNI3K (835 aa).

Glycine 2 carries N-myristoyl glycine lipidation. Residues 21–50 (SESYAIIIERLEDNLQIKENEFQELRHIFG) are a coiled coil. ANK repeat units lie at residues 66 to 96 (RGLS…RPSR), 100 to 129 (NGFP…DVQQ), 133 to 162 (GGLT…NVNV), 166 to 195 (VFFT…DVNV), 199 to 228 (VGDR…KADV), 234 to 263 (EDHV…EVQP), 269 to 298 (YGDT…TESL), 304 to 335 (FSET…NINH), 339 to 368 (DGHT…DMNL), and 381 to 410 (DEQT…PQEE). Residues 463 to 723 (IEFHEIIGSG…EVVSKLEECL (261 aa)) form the Protein kinase domain. ATP contacts are provided by residues 469 to 477 (IGSGSFGKV) and lysine 490. Aspartate 588 (proton acceptor) is an active-site residue.

The protein belongs to the protein kinase superfamily. TKL Ser/Thr protein kinase family. MAP kinase kinase kinase subfamily. Interacts with TNNI3, ACTC, ACTA1, MYBPC3, AIP, FABP3 and HADHB. The cofactor is Mg(2+). In terms of processing, autophosphorylated.

Its subcellular location is the nucleus. It localises to the cytoplasm. The enzyme catalyses L-seryl-[protein] + ATP = O-phospho-L-seryl-[protein] + ADP + H(+). It catalyses the reaction L-threonyl-[protein] + ATP = O-phospho-L-threonyl-[protein] + ADP + H(+). May play a role in cardiac physiology. In Rattus norvegicus (Rat), this protein is Serine/threonine-protein kinase TNNI3K.